Here is a 188-residue protein sequence, read N- to C-terminus: Large ribosomal subunit protein eL18z (188 aa).

This sequence belongs to the eukaryotic ribosomal protein eL18 family.

This Arabidopsis thaliana (Mouse-ear cress) protein is Large ribosomal subunit protein eL18z (RPL18A).